Here is a 433-residue protein sequence, read N- to C-terminus: 4-hydroxy-3-methylbut-2-en-1-yl diphosphate synthase (flavodoxin) (433 aa).

The [4Fe-4S] cluster site is built by C320, C323, C366, and E373.

It belongs to the IspG family. It depends on [4Fe-4S] cluster as a cofactor.

The catalysed reaction is (2E)-4-hydroxy-3-methylbut-2-enyl diphosphate + oxidized [flavodoxin] + H2O + 2 H(+) = 2-C-methyl-D-erythritol 2,4-cyclic diphosphate + reduced [flavodoxin]. Its pathway is isoprenoid biosynthesis; isopentenyl diphosphate biosynthesis via DXP pathway; isopentenyl diphosphate from 1-deoxy-D-xylulose 5-phosphate: step 5/6. Converts 2C-methyl-D-erythritol 2,4-cyclodiphosphate (ME-2,4cPP) into 1-hydroxy-2-methyl-2-(E)-butenyl 4-diphosphate. This chain is 4-hydroxy-3-methylbut-2-en-1-yl diphosphate synthase (flavodoxin), found in Beijerinckia indica subsp. indica (strain ATCC 9039 / DSM 1715 / NCIMB 8712).